The primary structure comprises 160 residues: Transcription elongation factor GreA (160 aa).

Positions 1–72 (MAEKTYPMTL…QISSLETKIR (72 aa)) form a coiled coil.

This sequence belongs to the GreA/GreB family.

Functionally, necessary for efficient RNA polymerase transcription elongation past template-encoded arresting sites. The arresting sites in DNA have the property of trapping a certain fraction of elongating RNA polymerases that pass through, resulting in locked ternary complexes. Cleavage of the nascent transcript by cleavage factors such as GreA or GreB allows the resumption of elongation from the new 3'terminus. GreA releases sequences of 2 to 3 nucleotides. In Streptococcus pneumoniae (strain Hungary19A-6), this protein is Transcription elongation factor GreA.